The chain runs to 321 residues: tRNA(Ile)-lysidine synthase (321 aa).

30–35 (SGGSDS) serves as a coordination point for ATP.

This sequence belongs to the tRNA(Ile)-lysidine synthase family.

It localises to the cytoplasm. The catalysed reaction is cytidine(34) in tRNA(Ile2) + L-lysine + ATP = lysidine(34) in tRNA(Ile2) + AMP + diphosphate + H(+). Functionally, ligates lysine onto the cytidine present at position 34 of the AUA codon-specific tRNA(Ile) that contains the anticodon CAU, in an ATP-dependent manner. Cytidine is converted to lysidine, thus changing the amino acid specificity of the tRNA from methionine to isoleucine. The chain is tRNA(Ile)-lysidine synthase from Chlamydia trachomatis serovar A (strain ATCC VR-571B / DSM 19440 / HAR-13).